Here is a 382-residue protein sequence, read N- to C-terminus: Na(+)/H(+) antiporter NhaA (382 aa).

Transmembrane regions (helical) follow at residues 14–34 (AGGILLVIAAAIAMMIANSSL), 49–69 (MSVSHWINDGLMAVFFLLIGL), 87–107 (IFPAIAAVGGMLAPALVYVAF), 117–137 (GWAIPAATDIAFALGIMALLG), 146–166 (VFLLALAIIDDLGVVVIIAFF), 171–191 (LSVLALVIGFVMTGLLFLLNA), 205–225 (FILWVSVLQSGVHATLAGVVL), 252–272 (VAFAILPVFAFANAGISLEGV), 285–305 (VALGLFLGKPLGIFSFSYLAV), 321–341 (IFAVSVLCGIGFTMSIFISSL), and 356–376 (LGILMGSTFAAVVGYALLSIS).

The protein belongs to the NhaA Na(+)/H(+) (TC 2.A.33) antiporter family.

The protein localises to the cell inner membrane. It catalyses the reaction Na(+)(in) + 2 H(+)(out) = Na(+)(out) + 2 H(+)(in). Na(+)/H(+) antiporter that extrudes sodium in exchange for external protons. The protein is Na(+)/H(+) antiporter NhaA of Aliivibrio fischeri (strain ATCC 700601 / ES114) (Vibrio fischeri).